Reading from the N-terminus, the 660-residue chain is Acetyl-coenzyme A synthetase (660 aa).

CoA-binding positions include 197–200 (RGGK) and Thr317. ATP contacts are provided by residues 397 to 399 (GEP), 421 to 426 (DTWWQT), Asp512, and Arg528. A CoA-binding site is contributed by Ser536. Arg539 contacts ATP. 3 residues coordinate Mg(2+): Val550, His552, and Val555. N6-acetyllysine is present on Lys625.

This sequence belongs to the ATP-dependent AMP-binding enzyme family. The cofactor is Mg(2+). Post-translationally, acetylated. Deacetylation by the SIR2-homolog deacetylase activates the enzyme.

It carries out the reaction acetate + ATP + CoA = acetyl-CoA + AMP + diphosphate. Functionally, catalyzes the conversion of acetate into acetyl-CoA (AcCoA), an essential intermediate at the junction of anabolic and catabolic pathways. AcsA undergoes a two-step reaction. In the first half reaction, AcsA combines acetate with ATP to form acetyl-adenylate (AcAMP) intermediate. In the second half reaction, it can then transfer the acetyl group from AcAMP to the sulfhydryl group of CoA, forming the product AcCoA. This is Acetyl-coenzyme A synthetase from Burkholderia mallei (strain NCTC 10247).